Here is a 294-residue protein sequence, read N- to C-terminus: Protease HtpX homolog 2 (294 aa).

2 consecutive transmembrane segments (helical) span residues Met-15 to Tyr-35 and Gly-37 to Tyr-57. Zn(2+) is bound at residue His-140. Residue Glu-141 is part of the active site. Residue His-144 participates in Zn(2+) binding. Helical transmembrane passes span Ala-151 to Leu-171 and Gly-185 to Ile-205. Zn(2+) is bound at residue Glu-213.

Belongs to the peptidase M48B family. Zn(2+) is required as a cofactor.

The protein localises to the cell membrane. The sequence is that of Protease HtpX homolog 2 from Methanosarcina acetivorans (strain ATCC 35395 / DSM 2834 / JCM 12185 / C2A).